The following is a 270-amino-acid chain: Small ribosomal subunit protein eS1 (270 aa).

2 disordered regions span residues 1-21 and 238-270; these read MAVG…KKKV and GGGK…QESV.

It belongs to the eukaryotic ribosomal protein eS1 family. As to quaternary structure, component of the small ribosomal subunit. Mature ribosomes consist of a small (40S) and a large (60S) subunit. The 40S subunit contains about 33 different proteins and 1 molecule of RNA (18S). The 60S subunit contains about 49 different proteins and 3 molecules of RNA (28S, 5.8S and 5S).

It is found in the cytoplasm. The polypeptide is Small ribosomal subunit protein eS1 (Aedes aegypti (Yellowfever mosquito)).